Reading from the N-terminus, the 668-residue chain is DNA ligase (668 aa).

NAD(+)-binding positions include 32–36, 81–82, and Glu-111; these read DVEYD and SL. Lys-113 serves as the catalytic N6-AMP-lysine intermediate. 4 residues coordinate NAD(+): Arg-134, Glu-171, Lys-290, and Lys-314. Residues Cys-408, Cys-411, Cys-426, and Cys-432 each coordinate Zn(2+). Residues 591–668 form the BRCT domain; that stretch reads EEDLSLKGQT…DEEALIAILS (78 aa).

It belongs to the NAD-dependent DNA ligase family. LigA subfamily. Mg(2+) is required as a cofactor. The cofactor is Mn(2+).

It carries out the reaction NAD(+) + (deoxyribonucleotide)n-3'-hydroxyl + 5'-phospho-(deoxyribonucleotide)m = (deoxyribonucleotide)n+m + AMP + beta-nicotinamide D-nucleotide.. DNA ligase that catalyzes the formation of phosphodiester linkages between 5'-phosphoryl and 3'-hydroxyl groups in double-stranded DNA using NAD as a coenzyme and as the energy source for the reaction. It is essential for DNA replication and repair of damaged DNA. In Shewanella piezotolerans (strain WP3 / JCM 13877), this protein is DNA ligase.